Here is a 439-residue protein sequence, read N- to C-terminus: MAFVDQAQIEVKAGKGGDGIVSFRHEKFVAMGGPFGGDGGHGGSIIFKVDEGLRTLMDFRYNRHFKAQPGGNGGTKGMTGASADNRVVKVPQGTTVSDADTGEVLADMLENGQELVVAKGGRGGRGNIHFATPANPAPELSENGEPGQIRNLKLELKVLADVGLVGFPSAGKSTLLSVVSNAKPKVAAYHFTTLSPNIGMVRLDDDRDFVMADLPGLIEGASQGIGLGFQFLRHVERTKVILHLVDMSGIEGTDPYTQYRKILDELQQYDETILNRPQIVVPTKMDMPDSEENLAKFRKEVATDSGLPIQPEIVPISSITRDGVKDLMRLTADMLATAPAPESYRPETKNDTSEKSYTFKPETHDFTVEWIADEERWLLSGAEIEKLFLMTNIQRDATIMRFARQLRHMGVDDKLREAGAKDGDDVRINNSDFVFEFSE.

Positions 1-159 constitute an Obg domain; that stretch reads MAFVDQAQIE…RNLKLELKVL (159 aa). Positions 160 to 336 constitute an OBG-type G domain; that stretch reads ADVGLVGFPS…LMRLTADMLA (177 aa). Residues 166 to 173, 191 to 195, 213 to 216, 283 to 286, and 317 to 319 contribute to the GTP site; these read GFPSAGKS, FTTLS, DLPG, TKMD, and SSI. Ser-173 and Thr-193 together coordinate Mg(2+). Residues 338-357 are disordered; it reads APAPESYRPETKNDTSEKSY. A compositionally biased stretch (basic and acidic residues) spans 344–354; it reads YRPETKNDTSE. The OCT domain maps to 358–439; sequence TFKPETHDFT…NSDFVFEFSE (82 aa).

It belongs to the TRAFAC class OBG-HflX-like GTPase superfamily. OBG GTPase family. As to quaternary structure, monomer. Mg(2+) is required as a cofactor.

It localises to the cytoplasm. In terms of biological role, an essential GTPase which binds GTP, GDP and possibly (p)ppGpp with moderate affinity, with high nucleotide exchange rates and a fairly low GTP hydrolysis rate. Plays a role in control of the cell cycle, stress response, ribosome biogenesis and in those bacteria that undergo differentiation, in morphogenesis control. The sequence is that of GTPase Obg from Leuconostoc mesenteroides subsp. mesenteroides (strain ATCC 8293 / DSM 20343 / BCRC 11652 / CCM 1803 / JCM 6124 / NCDO 523 / NBRC 100496 / NCIMB 8023 / NCTC 12954 / NRRL B-1118 / 37Y).